The following is a 414-amino-acid chain: Multifunctional CCA protein (414 aa).

ATP-binding residues include G8 and R11. Residues G8 and R11 each coordinate CTP. Positions 21 and 23 each coordinate Mg(2+). ATP-binding residues include R91, R137, and R140. CTP contacts are provided by R91, R137, and R140. One can recognise an HD domain in the interval 228-329 (TGIHTLMTLA…LKLFDAVDVW (102 aa)).

It belongs to the tRNA nucleotidyltransferase/poly(A) polymerase family. Bacterial CCA-adding enzyme type 1 subfamily. Monomer. Can also form homodimers and oligomers. Mg(2+) serves as cofactor. The cofactor is Ni(2+).

It carries out the reaction a tRNA precursor + 2 CTP + ATP = a tRNA with a 3' CCA end + 3 diphosphate. It catalyses the reaction a tRNA with a 3' CCA end + 2 CTP + ATP = a tRNA with a 3' CCACCA end + 3 diphosphate. In terms of biological role, catalyzes the addition and repair of the essential 3'-terminal CCA sequence in tRNAs without using a nucleic acid template. Adds these three nucleotides in the order of C, C, and A to the tRNA nucleotide-73, using CTP and ATP as substrates and producing inorganic pyrophosphate. tRNA 3'-terminal CCA addition is required both for tRNA processing and repair. Also involved in tRNA surveillance by mediating tandem CCA addition to generate a CCACCA at the 3' terminus of unstable tRNAs. While stable tRNAs receive only 3'-terminal CCA, unstable tRNAs are marked with CCACCA and rapidly degraded. The chain is Multifunctional CCA protein from Serratia proteamaculans (strain 568).